A 591-amino-acid chain; its full sequence is V-type ATP synthase alpha chain (591 aa).

Residue 232–239 coordinates ATP; sequence GPFGAGKT.

This sequence belongs to the ATPase alpha/beta chains family.

It catalyses the reaction ATP + H2O + 4 H(+)(in) = ADP + phosphate + 5 H(+)(out). Produces ATP from ADP in the presence of a proton gradient across the membrane. The V-type alpha chain is a catalytic subunit. This chain is V-type ATP synthase alpha chain, found in Nitrosococcus oceani (strain ATCC 19707 / BCRC 17464 / JCM 30415 / NCIMB 11848 / C-107).